Here is a 508-residue protein sequence, read N- to C-terminus: Transposase (508 aa).

Residues 3 to 65 enclose the HTH IS21-type domain; that stretch reads LLSVIRRWHF…PFADRLSAWL (63 aa). Residues 124 to 299 form the Integrase catalytic domain; sequence LAFEPGEAFQ…TIADIWVEEV (176 aa).

The protein belongs to the transposase IS21/IS408/IS1162 family.

Functionally, required for the transposition of the insertion element. The chain is Transposase (nmoT) from Aminobacter aminovorans (Chelatobacter heintzii).